A 367-amino-acid polypeptide reads, in one-letter code: Histidinol-phosphate aminotransferase 1 (367 aa).

Lysine 226 is subject to N6-(pyridoxal phosphate)lysine.

Belongs to the class-II pyridoxal-phosphate-dependent aminotransferase family. Histidinol-phosphate aminotransferase subfamily. As to quaternary structure, homodimer. Pyridoxal 5'-phosphate is required as a cofactor.

It catalyses the reaction L-histidinol phosphate + 2-oxoglutarate = 3-(imidazol-4-yl)-2-oxopropyl phosphate + L-glutamate. It participates in amino-acid biosynthesis; L-histidine biosynthesis; L-histidine from 5-phospho-alpha-D-ribose 1-diphosphate: step 7/9. This chain is Histidinol-phosphate aminotransferase 1 (hisC1), found in Haemophilus influenzae (strain ATCC 51907 / DSM 11121 / KW20 / Rd).